The primary structure comprises 860 residues: Leucine--tRNA ligase (860 aa).

Residues 42–52 carry the 'HIGH' region motif; sequence PYPSGRLHMGH. A 'KMSKS' region motif is present at residues 619–623; it reads KMSKS. An ATP-binding site is contributed by Lys-622.

This sequence belongs to the class-I aminoacyl-tRNA synthetase family.

It is found in the cytoplasm. It carries out the reaction tRNA(Leu) + L-leucine + ATP = L-leucyl-tRNA(Leu) + AMP + diphosphate. The sequence is that of Leucine--tRNA ligase from Salmonella typhimurium (strain LT2 / SGSC1412 / ATCC 700720).